The chain runs to 202 residues: Imidazoleglycerol-phosphate dehydratase (202 aa).

Belongs to the imidazoleglycerol-phosphate dehydratase family.

It localises to the cytoplasm. The enzyme catalyses D-erythro-1-(imidazol-4-yl)glycerol 3-phosphate = 3-(imidazol-4-yl)-2-oxopropyl phosphate + H2O. The protein operates within amino-acid biosynthesis; L-histidine biosynthesis; L-histidine from 5-phospho-alpha-D-ribose 1-diphosphate: step 6/9. The polypeptide is Imidazoleglycerol-phosphate dehydratase (Salinibacter ruber (strain DSM 13855 / M31)).